A 703-amino-acid chain; its full sequence is MKKIIYQQDEKDCGVACIAMILKHYGTEITIQRLRELSGTDLDGTSAFGIKKTFEKLGFDAPAFKAGDETWQEKDIPLPLIAHIISEQKYQHYVVVYKVKGDEIWIADPAKGKIRKTISEFSKEWTGVLLFPKPKAEYKPSIERVDSLSTFFPILIKQKSLFITIFGIISSYYFQGLLDNIIPNQARSTLNILSIGLIFVYLFRVLFEYSRSYLLLLIGQRMSMSIMLGYFKHVLSLPLSFFATRKSGEIISRFLDANKIIDALASATLSLILDIGMVILVGTTLAIQSTQLFLLTLAFLPFYILVVYVFIRSYDKANTEEMSAGAEVNSSIIESLKGIETIKSYNGENHVYDRVDSEFVTLMKKSFKSVTLDNVQQSLKMVIELISSVLILWLGSSYVIDGKISLGQLITYNALLVFFTEPLQNIINLQVKMQKARVANKRLNEIMSISPEQRNTNINISKNIFNKDIKLDKVSFSYNMKLPVLRDVSLEIYSKSKVALVGVSGSGKSTLAKLLVKFYDPSEGNITYGDINCQDIENHKLRNHVTYVPQESFFFNGTIIDNLTFGLSHQPEFEKIFRACKAACLVDFINQQPLRFDSVLEEGGNNLSGGQKQRLAIARAILNDSEIIIFDEATSGLDTLLEKEILEYLIKLQDKTIIFIAHHLSIAKACDEIIVLDQGILVGRGTHEELSEKEGVYRRLLNA.

In terms of domain architecture, Peptidase C39 spans 7–132 (QQDEKDCGVA…KEWTGVLLFP (126 aa)). Residue cysteine 13 is part of the active site. Residues 153–435 (PILIKQKSLF…IINLQVKMQK (283 aa)) enclose the ABC transmembrane type-1 domain. Helical transmembrane passes span 162–182 (FITIFGIISSYYFQGLLDNII), 189–209 (TLNILSIGLIFVYLFRVLFEY), 224–244 (MSIMLGYFKHVLSLPLSFFAT), 267–287 (ATLSLILDIGMVILVGTTLAI), 291–311 (QLFLLTLAFLPFYILVVYVFI), 381–401 (MVIELISSVLILWLGSSYVID), and 409–429 (LITYNALLVFFTEPLQNIINL). Residues 469–703 (IKLDKVSFSY…EGVYRRLLNA (235 aa)) form the ABC transporter domain. Residue 502 to 509 (GVSGSGKS) coordinates ATP.

The protein belongs to the ABC transporter superfamily. LagD family. As to quaternary structure, homodimer.

The protein resides in the cell membrane. LagD (TC 3.A.1) is involved in processing the signal peptide and probably also in export of the bacteriocin lactococcin G. The polypeptide is Lactococcin-G-processing and transport ATP-binding protein LagD (lagD) (Lactococcus lactis subsp. lactis (Streptococcus lactis)).